An 865-amino-acid chain; its full sequence is Protein translocase subunit SecA (865 aa).

ATP-binding positions include Gln93, Gly111–Thr115, and Asp501. Cys841, Cys843, Cys852, and Cys853 together coordinate Zn(2+).

The protein belongs to the SecA family. Monomer and homodimer. Part of the essential Sec protein translocation apparatus which comprises SecA, SecYEG and auxiliary proteins SecDF-YajC and YidC. Zn(2+) serves as cofactor.

It localises to the cell inner membrane. Its subcellular location is the cytoplasm. It carries out the reaction ATP + H2O + cellular proteinSide 1 = ADP + phosphate + cellular proteinSide 2.. Functionally, part of the Sec protein translocase complex. Interacts with the SecYEG preprotein conducting channel. Has a central role in coupling the hydrolysis of ATP to the transfer of proteins into and across the cell membrane, serving as an ATP-driven molecular motor driving the stepwise translocation of polypeptide chains across the membrane. This Helicobacter acinonychis (strain Sheeba) protein is Protein translocase subunit SecA.